We begin with the raw amino-acid sequence, 718 residues long: Cyclomaltodextrin glucanotransferase (718 aa).

The signal sequence occupies residues 1–34; that stretch reads MFQMAKRAFLSTTLTLGLLAGSALPFLPASAVYA. Residues 35-172 are A1; sequence DPDTAVTNKQ…GIKIVIDFAP (138 aa). Positions 61, 63, 66, and 67 each coordinate Ca(2+). Residues cysteine 77 and cysteine 84 are joined by a disulfide bond. Positions 85 and 87 each coordinate Ca(2+). 134-135 is a substrate binding site; it reads YW. Asparagine 173 is a binding site for Ca(2+). The segment at 173 to 236 is b; it reads NHTSPAMETD…NLYDLADFNH (64 aa). Histidine 174 lines the substrate pocket. Isoleucine 224 contacts Ca(2+). Residues 227–230 and aspartate 230 contribute to the substrate site; that span reads NLYD. Aspartate 233 provides a ligand contact to Ca(2+). The A2 stretch occupies residues 237 to 440; the sequence is NNATIDKYFK…LRKSNPAIAY (204 aa). Arginine 261 is a substrate binding site. Residue aspartate 263 is the Nucleophile of the active site. Substrate is bound by residues 266–267 and histidine 267; that span reads KH. Position 267 (histidine 267) interacts with Ca(2+). Catalysis depends on glutamate 291, which acts as the Proton donor. Residues histidine 361, aspartate 405, and arginine 409 each contribute to the substrate site. The segment at 441 to 528 is c; the sequence is GSTQQRWINN…ATAVWQYTTA (88 aa). A d region spans residues 529-614; that stretch reads ETTPTIGHVG…SNAYNNFTIL (86 aa). The IPT/TIG domain maps to 532–612; that stretch reads PTIGHVGPVM…VNSNAYNNFT (81 aa). Positions 613 to 718 constitute a CBM20 domain; it reads ILTGDQVTVR…GTATVTVNWQ (106 aa). The e stretch occupies residues 615 to 718; the sequence is TGDQVTVRFV…GTATVTVNWQ (104 aa).

Belongs to the glycosyl hydrolase 13 family. Monomer. Ca(2+) is required as a cofactor.

The protein localises to the secreted. It carries out the reaction Cyclizes part of a (1-&gt;4)-alpha-D-glucan chain by formation of a (1-&gt;4)-alpha-D-glucosidic bond.. This Niallia circulans (Bacillus circulans) protein is Cyclomaltodextrin glucanotransferase.